The primary structure comprises 142 residues: Large ribosomal subunit protein uL11 (142 aa).

The protein belongs to the universal ribosomal protein uL11 family. In terms of assembly, part of the ribosomal stalk of the 50S ribosomal subunit. Interacts with L10 and the large rRNA to form the base of the stalk. L10 forms an elongated spine to which L12 dimers bind in a sequential fashion forming a multimeric L10(L12)X complex. Post-translationally, one or more lysine residues are methylated.

Functionally, forms part of the ribosomal stalk which helps the ribosome interact with GTP-bound translation factors. The polypeptide is Large ribosomal subunit protein uL11 (Klebsiella pneumoniae subsp. pneumoniae (strain ATCC 700721 / MGH 78578)).